A 303-amino-acid polypeptide reads, in one-letter code: Glycine--tRNA ligase alpha subunit (303 aa).

Belongs to the class-II aminoacyl-tRNA synthetase family. Tetramer of two alpha and two beta subunits.

The protein resides in the cytoplasm. It carries out the reaction tRNA(Gly) + glycine + ATP = glycyl-tRNA(Gly) + AMP + diphosphate. This is Glycine--tRNA ligase alpha subunit from Streptococcus equi subsp. equi (strain 4047).